The sequence spans 240 residues: MTFQFQNEWNPILSDISDSIVDRTAAQWTPATYWGLLEADARAIRPVQQYVCNGPCCSTLWAGPVPGYVITQFVPPVTYPNPYRVVAAPGCAPGSEWCEPPTVSAPPPPSQFSDEPTSPELAPAVPKIDIHEAPVATVSSPTSPRPITTESSRVSPTKEKWGRKRVHKKTHAEATWIPQILKRGMSLSSLLPAAARGQRSAVRRRVTFTNSKDVLYYDKYSAPVMIQGNTVYVEKTFSDK.

Disordered stretches follow at residues 99 to 121 (EPPT…SPEL) and 136 to 167 (ATVS…KRVH). Over residues 137-155 (TVSSPTSPRPITTESSRVS) the composition is skewed to polar residues.

This is an uncharacterized protein from Ictaluridae (bullhead catfishes).